The sequence spans 256 residues: MAFTLTNKNVIFVAGLGGIGLDTSKELVKRDLKNLVILDRIENPAAIAELQAINPKVTVTFYPYDVTVPIAETTKLLKTIFAKLKTVDVLINGAGILDDHQIERTIAVNYTGLVNTTTAILDFWDKRKGGPGGIICNIGSVTGFNAIYQVPVYSGTKAAVVNFTSSLAKLAPITGVTAYTVNPGITRTTLVHKFNSWLDVEPQVAEKLLAHPTQPSLACAENFVKAIELNQNGAIWKLDLSTLEAIQWTKHWDSGI.

12 to 35 contributes to the NAD(+) binding site; it reads FVAGLGGIGLDTSKELVKRDLKNL. Residue serine 140 participates in substrate binding. Tyrosine 153 acts as the Proton acceptor in catalysis.

This sequence belongs to the short-chain dehydrogenases/reductases (SDR) family. Homodimer.

It catalyses the reaction a primary alcohol + NAD(+) = an aldehyde + NADH + H(+). It carries out the reaction a secondary alcohol + NAD(+) = a ketone + NADH + H(+). The sequence is that of Alcohol dehydrogenase (Adh) from Drosophila mauritiana (Fruit fly).